Here is a 344-residue protein sequence, read N- to C-terminus: Lipase chaperone (344 aa).

The helical transmembrane segment at 14–34 threads the bilayer; sequence AVVYGVVGLAAIAGVAMWSGA.

Belongs to the lipase chaperone family.

The protein localises to the cell inner membrane. May be involved in the folding of the extracellular lipase during its passage through the periplasm. In Burkholderia cepacia (Pseudomonas cepacia), this protein is Lipase chaperone (lifO).